Consider the following 77-residue polypeptide: U8-lycotoxin-Ls1m (77 aa).

Residues 1 to 20 form the signal peptide; the sequence is MKLMIFTGLVLFAIVSLIEA. A propeptide spanning residues 21 to 26 is cleaved from the precursor; it reads QAENEK.

Belongs to the neurotoxin 19 (CSTX) family. 08 (U8-Lctx) subfamily. Contains 4 disulfide bonds. In terms of tissue distribution, expressed by the venom gland.

It is found in the secreted. This is U8-lycotoxin-Ls1m from Lycosa singoriensis (Wolf spider).